Consider the following 365-residue polypeptide: Chorismate synthase (365 aa).

An NADP(+)-binding site is contributed by arginine 47. FMN is bound by residues 124-126, glycine 287, 302-306, and arginine 328; these read RAS and KPTAT.

It belongs to the chorismate synthase family. Homotetramer. It depends on FMNH2 as a cofactor.

It catalyses the reaction 5-O-(1-carboxyvinyl)-3-phosphoshikimate = chorismate + phosphate. It functions in the pathway metabolic intermediate biosynthesis; chorismate biosynthesis; chorismate from D-erythrose 4-phosphate and phosphoenolpyruvate: step 7/7. Catalyzes the anti-1,4-elimination of the C-3 phosphate and the C-6 proR hydrogen from 5-enolpyruvylshikimate-3-phosphate (EPSP) to yield chorismate, which is the branch point compound that serves as the starting substrate for the three terminal pathways of aromatic amino acid biosynthesis. This reaction introduces a second double bond into the aromatic ring system. This is Chorismate synthase from Prochlorococcus marinus (strain AS9601).